The primary structure comprises 261 residues: uncharacterized protein (261 aa).

The stretch at lysine 16–glutamine 147 forms a coiled coil.

It is found in the cytoplasm. This is an uncharacterized protein from Schizosaccharomyces pombe (strain 972 / ATCC 24843) (Fission yeast).